We begin with the raw amino-acid sequence, 626 residues long: ABC transporter G family member 8 (626 aa).

The ABC transporter domain occupies 56 to 300 (VNLDNKTENS…SLGYPCPNNT (245 aa)). 90-97 (GPSGSGKS) is an ATP binding site. Residues 373-621 (GNALSRVITA…SLSYFALHFL (249 aa)) enclose the ABC transmembrane type-2 domain. The next 7 membrane-spanning stretches (helical) occupy residues 376 to 396 (LSRVITAIVIGALFGSCFAGL), 409 to 429 (TLFFLTTGLMLSPFSMITLFL), 447 to 467 (FPYFLSMITVELTIEFFVTLV), 485 to 505 (FFFAVLVYSFIHSLSTFFISS), 515 to 535 (LTFSYASSLSVVFMLFAGFYV), 543 to 563 (AFGWLHWVNPAFYGYSSVVIN), and 600 to 620 (FGVLVAWATFFYSLSYFALHF).

Belongs to the ABC transporter superfamily. ABCG family. Eye pigment precursor importer (TC 3.A.1.204) subfamily.

The protein localises to the membrane. The protein is ABC transporter G family member 8 (abcG8) of Dictyostelium discoideum (Social amoeba).